We begin with the raw amino-acid sequence, 82 residues long: MAIDRAQNLQDTFLNHVRKTKTPLTIFLVNGVKLQGIVTWFDNFCLLLRRDGHSQLVYKHAISTIMPGAPIQLFEGGEDAPL.

The region spanning 11-71 (DTFLNHVRKT…ISTIMPGAPI (61 aa)) is the Sm domain.

Belongs to the Hfq family. As to quaternary structure, homohexamer.

Functionally, RNA chaperone that binds small regulatory RNA (sRNAs) and mRNAs to facilitate mRNA translational regulation in response to envelope stress, environmental stress and changes in metabolite concentrations. Also binds with high specificity to tRNAs. This chain is RNA-binding protein Hfq, found in Nitrobacter winogradskyi (strain ATCC 25391 / DSM 10237 / CIP 104748 / NCIMB 11846 / Nb-255).